The sequence spans 230 residues: MNIRSFLLISIFTAISYLVVDGATPRTFAPSASVSINYGTLSTVFPSLYRRASTSSSSSSSSISTSHDSQPSTSSSSPSSTSTSSSSGTSVITASDVSASNEIISSSTNNSIHQQVSVVTEYVTIQPTTYVTTIFQYTSLASTIAAQSGIASLVPQTYTPYGGVKALIGILVGVVVGSVFLLAIVMVIARIWGPRLLANKDQNNNNEDLDSNLVSKDSEGTPQITYASNF.

The signal sequence occupies residues 1 to 22; it reads MNIRSFLLISIFTAISYLVVDG. The Lumenal segment spans residues 23-167; it reads ATPRTFAPSA…YTPYGGVKAL (145 aa). A disordered region spans residues 55–90; that stretch reads SSSSSSSSISTSHDSQPSTSSSSPSSTSTSSSSGTS. Residues 168–188 form a helical membrane-spanning segment; sequence IGILVGVVVGSVFLLAIVMVI. Residues 189–230 lie on the Cytoplasmic side of the membrane; that stretch reads ARIWGPRLLANKDQNNNNEDLDSNLVSKDSEGTPQITYASNF. Positions 208–230 are disordered; the sequence is DLDSNLVSKDSEGTPQITYASNF.

The protein localises to the endoplasmic reticulum membrane. This is an uncharacterized protein from Schizosaccharomyces pombe (strain 972 / ATCC 24843) (Fission yeast).